Reading from the N-terminus, the 224-residue chain is Imidazoleglycerol-phosphate dehydratase (224 aa).

Belongs to the imidazoleglycerol-phosphate dehydratase family.

It catalyses the reaction D-erythro-1-(imidazol-4-yl)glycerol 3-phosphate = 3-(imidazol-4-yl)-2-oxopropyl phosphate + H2O. It functions in the pathway amino-acid biosynthesis; L-histidine biosynthesis; L-histidine from 5-phospho-alpha-D-ribose 1-diphosphate: step 6/9. The sequence is that of Imidazoleglycerol-phosphate dehydratase (HIS3) from Cyberlindnera jadinii (Torula yeast).